The chain runs to 579 residues: Putative fatty-acid--CoA ligase fadD21 (579 aa).

Belongs to the ATP-dependent AMP-binding enzyme family.

The sequence is that of Putative fatty-acid--CoA ligase fadD21 (fadD21) from Mycobacterium leprae (strain TN).